A 248-amino-acid polypeptide reads, in one-letter code: MYTLVLIRHGESLWNRENRFTGWRDIDLSPQGIDEARAAGKALREQGFEFDLAYTSVLKRAIRTLWLIQEEMDLMWIPVIRTWRLNERHYGALTGLNKIETVEKYGEQQVHIWRRSYDIPPPAYTPDNLDNPSYHRRYQEIKRSDLPMTECLKDTVARFIPYWNDEIAPVIRSGKRVLITAHGNSLRALVKHLDNISDTDIPDLNIPTGIPLVYELDDNLKPVRSYYLGDEEKVKAAMEAVKNQGKAK.

Substrate is bound by residues 8–15 (RHGESLWN), 21–22 (TG), Arg-60, 87–90 (ERHY), Lys-98, 114–115 (RR), and 183–184 (GN). His-9 serves as the catalytic Tele-phosphohistidine intermediate. Glu-87 acts as the Proton donor/acceptor in catalysis.

The protein belongs to the phosphoglycerate mutase family. BPG-dependent PGAM subfamily.

The catalysed reaction is (2R)-2-phosphoglycerate = (2R)-3-phosphoglycerate. The protein operates within carbohydrate degradation; glycolysis; pyruvate from D-glyceraldehyde 3-phosphate: step 3/5. Catalyzes the interconversion of 2-phosphoglycerate and 3-phosphoglycerate. This Methanospirillum hungatei JF-1 (strain ATCC 27890 / DSM 864 / NBRC 100397 / JF-1) protein is 2,3-bisphosphoglycerate-dependent phosphoglycerate mutase.